The chain runs to 550 residues: Glucose-6-phosphate isomerase (550 aa).

E356 (proton donor) is an active-site residue. Catalysis depends on residues H387 and K515.

It belongs to the GPI family.

The protein resides in the cytoplasm. The enzyme catalyses alpha-D-glucose 6-phosphate = beta-D-fructose 6-phosphate. The protein operates within carbohydrate biosynthesis; gluconeogenesis. It participates in carbohydrate degradation; glycolysis; D-glyceraldehyde 3-phosphate and glycerone phosphate from D-glucose: step 2/4. In terms of biological role, catalyzes the reversible isomerization of glucose-6-phosphate to fructose-6-phosphate. This chain is Glucose-6-phosphate isomerase, found in Vibrio atlanticus (strain LGP32) (Vibrio splendidus (strain Mel32)).